The following is a 606-amino-acid chain: Aspartate--tRNA(Asp/Asn) ligase (606 aa).

Glutamate 177 serves as a coordination point for L-aspartate. Residues 201–204 are aspartate; the sequence is QLFK. Residue arginine 223 participates in L-aspartate binding. ATP is bound by residues 223-225 and glutamine 232; that span reads RDE. Histidine 461 is a binding site for L-aspartate. Position 499 (glutamate 499) interacts with ATP. Arginine 506 contributes to the L-aspartate binding site. 551 to 554 is a binding site for ATP; sequence GLDR.

This sequence belongs to the class-II aminoacyl-tRNA synthetase family. Type 1 subfamily. Homodimer.

The protein resides in the cytoplasm. The enzyme catalyses tRNA(Asx) + L-aspartate + ATP = L-aspartyl-tRNA(Asx) + AMP + diphosphate. Aspartyl-tRNA synthetase with relaxed tRNA specificity since it is able to aspartylate not only its cognate tRNA(Asp) but also tRNA(Asn). Reaction proceeds in two steps: L-aspartate is first activated by ATP to form Asp-AMP and then transferred to the acceptor end of tRNA(Asp/Asn). In Prochlorococcus marinus (strain NATL2A), this protein is Aspartate--tRNA(Asp/Asn) ligase.